The chain runs to 873 residues: Zinc fingers and homeoboxes protein 1 (873 aa).

The interval 1–63 is disordered; it reads MASRRKSTTP…ESVDSDNQQN (63 aa). The segment covering 18–30 has biased composition (acidic residues); that stretch reads QDPDLELISDLEE. Threonine 36 is modified (phosphothreonine). Phosphoserine occurs at positions 45, 47, and 48. 2 C2H2-type zinc fingers span residues 70–93 and 102–125; these read YECK…DSEH and YVCV…LKYH. Lysine 159 is covalently cross-linked (Glycyl lysine isopeptide (Lys-Gly) (interchain with G-Cter in SUMO2)). Residues 198-247 form a disordered region; that stretch reads VHHNSAEGTSEEKENGVKASREENAENTSSSASESNTSTSTVNQVHPSPA. At serine 202 the chain carries Phosphoserine. A compositionally biased stretch (basic and acidic residues) spans 207-221; that stretch reads SEEKENGVKASREEN. A compositionally biased stretch (low complexity) spans 223-238; it reads ENTSSSASESNTSTST. The segment at 272-432 is required for dimerization; the sequence is NSNLVPKVLI…QTNVQKSQVP (161 aa). The interval 272–564 is required for interaction with NFYA; that stretch reads NSNLVPKVLI…SQPKQSWNPF (293 aa). The homeobox 1 DNA-binding region spans 284 to 346; the sequence is NSIPTYNAAL…LKHGVSWTPE (63 aa). A disordered region spans residues 430–455; it reads QVPAAQPAAETKPATAAVPSSPSVRP. Residues lysine 441 and lysine 485 each participate in a glycyl lysine isopeptide (Lys-Gly) (interchain with G-Cter in SUMO2) cross-link. The segment at residues 464–526 is a DNA-binding region (homeobox 2); that stretch reads SFGIRAKKTK…YNQRNSKSNQ (63 aa). Disordered regions lie at residues 540-568, 627-664, and 731-767; these read IDSS…PDFA, DEKV…TGKI, and SSSL…KRMN. The span at 551 to 560 shows a compositional bias: low complexity; the sequence is AAAASQPKQS. The homeobox 3 DNA-binding region spans 569–631; it reads PQKFKEKTAE…TKALKDEKVE (63 aa). Residue lysine 629 forms a Glycyl lysine isopeptide (Lys-Gly) (interchain with G-Cter in SUMO2) linkage. Serine 648 is subject to Phosphoserine. The homeobox 4 DNA-binding region spans 660–722; the sequence is GTGKICKKTP…YAWKNGNLKW (63 aa). The interval 734-768 is required for nuclear localization; sequence LNGLSSLRKRGRGRPKGRGRGRPRGRPRGGKRMNT. A compositionally biased stretch (basic residues) spans 740-764; sequence LRKRGRGRPKGRGRGRPRGRPRGGK. Serine 774 is modified (phosphoserine). The segment at residues 777 to 832 is a DNA-binding region (homeobox 5); that stretch reads KFKTGTAILKDYYLKHKFLNEQDLDELVNRSHMGYEQVREWFAERQRRSELGIELF. The disordered stretch occupies residues 829–873; the sequence is IELFEENEEEDEVIDDQEEDEEETDDSDTWEPPRHVKRKLSKSDD. Acidic residues predominate over residues 831-857; the sequence is LFEENEEEDEVIDDQEEDEEETDDSDT. Positions 831–873 are required for repressor activity; it reads LFEENEEEDEVIDDQEEDEEETDDSDTWEPPRHVKRKLSKSDD. A compositionally biased stretch (basic residues) spans 863 to 873; sequence HVKRKLSKSDD.

This sequence belongs to the ZHX family. In terms of assembly, forms homodimers. Heterodimer (via HD1 domain) with ZHX2 (via HD1 domain). Also forms a heterodimer with ZHX3 which is a prerequisite for repressor activity. Interacts with ATF7IP and NFYA. Interacts (via homeobox domains) with DNMT3B (via PWWP domain). Ubiquitously expressed.

It is found in the nucleus. Functionally, acts as a transcriptional repressor. Increases DNMT3B-mediated repressive transcriptional activity when DNMT3B is tethered to DNA. May link molecule between DNMT3B and other co-repressor proteins. This is Zinc fingers and homeoboxes protein 1 (Zhx1) from Rattus norvegicus (Rat).